We begin with the raw amino-acid sequence, 375 residues long: Porin Omp2b (375 aa).

A signal peptide spans 1–22 (MNIKSLLLGSAAALVAASGAQA).

This sequence belongs to the alphaproteobacteria porin family. As to quaternary structure, homotrimer.

It is found in the cell outer membrane. Functionally, forms passive diffusion pores that allow small molecular weight hydrophilic materials across the outer membrane. The chain is Porin Omp2b (omp2b) from Brucella suis.